The chain runs to 765 residues: MATFQEFIQQNEDRDGVRFSWNVWPSSRLEATRMVVPVASLFTPLKERPDLPPIQYEPVLCSRATCRAVLNPLCQVDYRAKLWACNFCYQRNQFPPTYAGISEVNQPAELLPQFSTIEYVVQRGPQMPLNFLYVVDTCMEDDDLQALKESLQMSLSLLPPTALVGLITFGRMVQVHELGCEGISKSYVFRGTKDLNAKQLQEMLGLTKPAAAQAGRGPQQPQVPPSNRFLQPVQKIDMNLTDLLGELQRDPWPVTQGKRPLRSLGVALSIAVGLLECTFPNTGARIMAFIGGPATQGPGMVVGDELKTPIRSWHDIEKDNAKFMKKATKHYEALANRAAANGHIIDIYACALDQTGLLEMKCCTNYTGGYMVMADSFNTSLFKQTFQRVFTKDVQGCFKMALAGTLEIKTSREIKISGAIGPCVSLNAKGPCVSENEMGTGGTSQWKICGLDPNTTLGFYFEVVNQHNAPIPQGGRGAIQYVTQYQHSSGQRRIRVTTIARNWADAQSQIQSIAASFDQEAAAILMARLAVYKAETEEGPDVLRWLDRQLIRLCQKFGDYHKEDPNSFRFSETFSLYPQFMFHLRRSPFLQVFNNSPDESTYYRHQFMRQDLTQSLIMVQPILYAYSFNGPPEPVLLDSSSILPDRILLMDTFFQILIYHGETVSQWRKAGYQDMPEYENFRHLLQAPVDDAQELLHTRFPMPRYIDTEHGGSQARFLLSKVNPSQTHNNMYAWGQESGAPILTDDVSLQVFMDHLKKLAVSSAA.

C61, C66, C85, and C88 together coordinate Zn(2+). The stretch at 632 to 718 (PEPVLLDSSS…EHGGSQARFL (87 aa)) is one Gelsolin-like repeat.

This sequence belongs to the SEC23/SEC24 family. SEC23 subfamily. COPII is composed of at least five proteins: the Sec23/24 complex, the Sec13/31 complex and Sar1.

The protein localises to the cytoplasmic vesicle. It is found in the COPII-coated vesicle membrane. The protein resides in the endoplasmic reticulum membrane. Its subcellular location is the cytoplasm. It localises to the cytosol. Functionally, component of the coat protein complex II (COPII) which promotes the formation of transport vesicles from the endoplasmic reticulum (ER). The coat has two main functions, the physical deformation of the endoplasmic reticulum membrane into vesicles and the selection of cargo molecules for their transport to the Golgi complex. This Danio rerio (Zebrafish) protein is Protein transport protein Sec23A.